The following is a 946-amino-acid chain: ATP-dependent 6-phosphofructokinase subunit beta (946 aa).

The N-terminal catalytic PFK domain 1 stretch occupies residues Met1 to Thr559. ATP-binding positions include Gly192, Arg256 to Cys257, and Gly286 to Ser289. Residue Asp287 participates in Mg(2+) binding. Beta-D-fructose 6-phosphate-binding positions include Ser332–Asp334, Arg369, Met376–Arg378, Glu433, Arg461, and His467–Arg470. The active-site Proton acceptor is the Asp334. An interdomain linker region spans residues Ala560–Lys573. The segment at Lys574–Pro946 is C-terminal regulatory PFK domain 2. Beta-D-fructose 2,6-bisphosphate contacts are provided by residues Arg644, Thr702 to Asn706, Gln747 to Gly749, Lys833, His839 to Gln842, and Arg920.

The protein belongs to the phosphofructokinase type A (PFKA) family. ATP-dependent PFK group I subfamily. Eukaryotic two domain clade 'E' sub-subfamily. In terms of assembly, heterooctamer of 4 alpha and 4 beta chains. The cofactor is Mg(2+).

It localises to the cytoplasm. It catalyses the reaction beta-D-fructose 6-phosphate + ATP = beta-D-fructose 1,6-bisphosphate + ADP + H(+). The protein operates within carbohydrate degradation; glycolysis; D-glyceraldehyde 3-phosphate and glycerone phosphate from D-glucose: step 3/4. Allosterically activated by ADP, AMP, or fructose 2,6-bisphosphate, and allosterically inhibited by ATP or citrate. Functionally, catalyzes the phosphorylation of D-fructose 6-phosphate to fructose 1,6-bisphosphate by ATP, the first committing step of glycolysis. The sequence is that of ATP-dependent 6-phosphofructokinase subunit beta (PFK2) from Candida albicans (Yeast).